The chain runs to 358 residues: Phosphoribosylformylglycinamidine cyclo-ligase (358 aa).

Belongs to the AIR synthase family.

The protein resides in the cytoplasm. The enzyme catalyses 2-formamido-N(1)-(5-O-phospho-beta-D-ribosyl)acetamidine + ATP = 5-amino-1-(5-phospho-beta-D-ribosyl)imidazole + ADP + phosphate + H(+). It functions in the pathway purine metabolism; IMP biosynthesis via de novo pathway; 5-amino-1-(5-phospho-D-ribosyl)imidazole from N(2)-formyl-N(1)-(5-phospho-D-ribosyl)glycinamide: step 2/2. This chain is Phosphoribosylformylglycinamidine cyclo-ligase, found in Nitrosococcus oceani (strain ATCC 19707 / BCRC 17464 / JCM 30415 / NCIMB 11848 / C-107).